The chain runs to 154 residues: Myoglobin (154 aa).

Residues 2–148 (VLSDAEWHLV…FRKDIAAKYK (147 aa)) form the Globin domain. The residue at position 4 (Ser4) is a Phosphoserine. His65 is a nitrite binding site. An O2-binding site is contributed by His65. Phosphothreonine is present on Thr68. His94 lines the heme b pocket.

The protein belongs to the globin family. As to quaternary structure, monomeric.

The protein localises to the cytoplasm. The protein resides in the sarcoplasm. It carries out the reaction Fe(III)-heme b-[protein] + nitric oxide + H2O = Fe(II)-heme b-[protein] + nitrite + 2 H(+). It catalyses the reaction H2O2 + AH2 = A + 2 H2O. Functionally, monomeric heme protein which primary function is to store oxygen and facilitate its diffusion within muscle tissues. Reversibly binds oxygen through a pentacoordinated heme iron and enables its timely and efficient release as needed during periods of heightened demand. Depending on the oxidative conditions of tissues and cells, and in addition to its ability to bind oxygen, it also has a nitrite reductase activity whereby it regulates the production of bioactive nitric oxide. Under stress conditions, like hypoxia and anoxia, it also protects cells against reactive oxygen species thanks to its pseudoperoxidase activity. The sequence is that of Myoglobin (MB) from Balaenoptera acutorostrata (Common minke whale).